A 52-amino-acid chain; its full sequence is MRSAILLVIVAIVAILGFLGVNAEPLPSPLAEPNPHAKAAPLSPAVMASLAG.

The signal sequence occupies residues 1–23 (MRSAILLVIVAIVAILGFLGVNA). AXPX repeat units follow at residues 23–26 (AEPL), 31–34 (AEPN), and 39–42 (AAPL). The propeptide occupies 24 to 41 (EPLPSPLAEPNPHAKAAP). An Alanine amide modification is found at Ala51.

In terms of tissue distribution, expressed by the venom gland.

The protein localises to the secreted. This chain is Venom peptide 4a, found in Eumenes pomiformis (Potter wasp).